The chain runs to 344 residues: tRNA N6-adenosine threonylcarbamoyltransferase (344 aa).

Fe cation is bound by residues His-110 and His-114. Substrate contacts are provided by residues 133–137 (VMSGA), Asp-166, Gly-179, and Asn-278. Asp-303 serves as a coordination point for Fe cation.

Belongs to the KAE1 / TsaD family. Requires Fe(2+) as cofactor.

The protein localises to the cytoplasm. It catalyses the reaction L-threonylcarbamoyladenylate + adenosine(37) in tRNA = N(6)-L-threonylcarbamoyladenosine(37) in tRNA + AMP + H(+). Its function is as follows. Required for the formation of a threonylcarbamoyl group on adenosine at position 37 (t(6)A37) in tRNAs that read codons beginning with adenine. Is involved in the transfer of the threonylcarbamoyl moiety of threonylcarbamoyl-AMP (TC-AMP) to the N6 group of A37, together with TsaE and TsaB. TsaD likely plays a direct catalytic role in this reaction. This Chlamydia felis (strain Fe/C-56) (Chlamydophila felis) protein is tRNA N6-adenosine threonylcarbamoyltransferase.